We begin with the raw amino-acid sequence, 156 residues long: Succinate dehydrogenase assembly factor 2-B, mitochondrial (156 aa).

A mitochondrion-targeting transit peptide spans methionine 1–lysine 12.

The protein belongs to the SDHAF2 family. As to quaternary structure, interacts with the flavoprotein subunit within the SDH catalytic dimer.

It is found in the mitochondrion matrix. In terms of biological role, plays an essential role in the assembly of succinate dehydrogenase (SDH), an enzyme complex (also referred to as respiratory complex II) that is a component of both the tricarboxylic acid (TCA) cycle and the mitochondrial electron transport chain, and which couples the oxidation of succinate to fumarate with the reduction of ubiquinone (coenzyme Q) to ubiquinol. Required for flavinylation (covalent attachment of FAD) of the flavoprotein subunit of the SDH catalytic dimer. The protein is Succinate dehydrogenase assembly factor 2-B, mitochondrial of Drosophila willistoni (Fruit fly).